A 472-amino-acid chain; its full sequence is Methylenetetrahydrofolate--tRNA-(uracil-5-)-methyltransferase TrmFO (472 aa).

15–20 serves as a coordination point for FAD; sequence GGGLAG.

The protein belongs to the MnmG family. TrmFO subfamily. FAD serves as cofactor.

The protein resides in the cytoplasm. It carries out the reaction uridine(54) in tRNA + (6R)-5,10-methylene-5,6,7,8-tetrahydrofolate + NADH + H(+) = 5-methyluridine(54) in tRNA + (6S)-5,6,7,8-tetrahydrofolate + NAD(+). It catalyses the reaction uridine(54) in tRNA + (6R)-5,10-methylene-5,6,7,8-tetrahydrofolate + NADPH + H(+) = 5-methyluridine(54) in tRNA + (6S)-5,6,7,8-tetrahydrofolate + NADP(+). Catalyzes the folate-dependent formation of 5-methyl-uridine at position 54 (M-5-U54) in all tRNAs. This chain is Methylenetetrahydrofolate--tRNA-(uracil-5-)-methyltransferase TrmFO, found in Rhizobium meliloti (strain 1021) (Ensifer meliloti).